Reading from the N-terminus, the 171-residue chain is MKNIVLTGFMGTGKTTVGKKVATTLHFNFIDTDKLVEKMAGMSVAEIFEKHGEEYFRKLEKAAVIKASRLKNHVIATGGGVVLNPSNIVQLRKNGVIILLKARPEVILRNISKTKDRPLLAVEDPEKRIRELLEEREPFYRFADYTIDVSDKTIEEVAEEVIRAYIKLKGR.

11–16 contributes to the ATP binding site; the sequence is GTGKTT. Thr15 is a binding site for Mg(2+). Positions 33, 57, and 79 each coordinate substrate. Arg117 contacts ATP. Residue Arg136 coordinates substrate.

The protein belongs to the shikimate kinase family. As to quaternary structure, monomer. It depends on Mg(2+) as a cofactor.

The protein resides in the cytoplasm. It catalyses the reaction shikimate + ATP = 3-phosphoshikimate + ADP + H(+). The protein operates within metabolic intermediate biosynthesis; chorismate biosynthesis; chorismate from D-erythrose 4-phosphate and phosphoenolpyruvate: step 5/7. Catalyzes the specific phosphorylation of the 3-hydroxyl group of shikimic acid using ATP as a cosubstrate. In Caldanaerobacter subterraneus subsp. tengcongensis (strain DSM 15242 / JCM 11007 / NBRC 100824 / MB4) (Thermoanaerobacter tengcongensis), this protein is Shikimate kinase.